Consider the following 389-residue polypeptide: Protein P4 (389 aa).

This Rice tungro bacilliform virus (isolate Philippines) (RTBV) protein is Protein P4.